Here is a 691-residue protein sequence, read N- to C-terminus: Protein-glutamine gamma-glutamyltransferase E (691 aa).

Tyr-110 is modified (phosphotyrosine). Thr-111 is modified (phosphothreonine). The Ca(2+) site is built by Ala-221, Asn-224, Asn-226, and Asp-227. Cys-272 is a catalytic residue. Ca(2+) contacts are provided by Asp-301, Asp-303, Asn-305, Ser-307, and Asp-324. Catalysis depends on residues His-330 and Asp-353. The Ca(2+) site is built by Asn-393, Thr-414, Glu-442, and Glu-447.

This sequence belongs to the transglutaminase superfamily. Transglutaminase family. In terms of assembly, consists of two polypeptide chains, which are synthesized as a precursor form of a single polypeptide. The cofactor is Ca(2+). Post-translationally, activated by proteolytic processing. In vitro activation is commonly achieved by cleavage with dispase, a neutral bacterial protease. Physiological activation may be catalyzed by CTSL and, to a lesser extent, by CTSS.

Its subcellular location is the cytoplasm. The enzyme catalyses L-glutaminyl-[protein] + L-lysyl-[protein] = [protein]-L-lysyl-N(6)-5-L-glutamyl-[protein] + NH4(+). In terms of biological role, catalyzes the calcium-dependent formation of isopeptide cross-links between glutamine and lysine residues in various proteins, as well as the conjugation of polyamines to proteins. Involved in the formation of the cornified envelope (CE), a specialized component consisting of covalent cross-links of proteins beneath the plasma membrane of terminally differentiated keratinocytes. Catalyzes small proline-rich proteins and LOR cross-linking to form small interchain oligomers, which are further cross-linked by TGM1 onto the growing CE scaffold. In hair follicles, involved in cross-linking structural proteins to hardening the inner root sheath. The sequence is that of Protein-glutamine gamma-glutamyltransferase E (TGM3) from Bos taurus (Bovine).